Here is a 447-residue protein sequence, read N- to C-terminus: Asparagine--tRNA ligase (447 aa).

Belongs to the class-II aminoacyl-tRNA synthetase family. As to quaternary structure, homodimer.

The protein localises to the cytoplasm. It catalyses the reaction tRNA(Asn) + L-asparagine + ATP = L-asparaginyl-tRNA(Asn) + AMP + diphosphate + H(+). The chain is Asparagine--tRNA ligase from Streptococcus pneumoniae serotype 4 (strain ATCC BAA-334 / TIGR4).